We begin with the raw amino-acid sequence, 258 residues long: Elongation factor Ts (258 aa).

The tract at residues 81–84 is involved in Mg(2+) ion dislocation from EF-Tu; sequence TDFV. The disordered stretch occupies residues 216–258; that stretch reads GLKPAEAPKVEETPPAPPEEPAPEPAPAAESKPAKKGSAKKKK. Positions 229–241 are enriched in pro residues; the sequence is PPAPPEEPAPEPA. A compositionally biased stretch (basic residues) spans 249-258; it reads AKKGSAKKKK.

This sequence belongs to the EF-Ts family.

Its subcellular location is the cytoplasm. Associates with the EF-Tu.GDP complex and induces the exchange of GDP to GTP. It remains bound to the aminoacyl-tRNA.EF-Tu.GTP complex up to the GTP hydrolysis stage on the ribosome. The chain is Elongation factor Ts from Synechococcus sp. (strain JA-2-3B'a(2-13)) (Cyanobacteria bacterium Yellowstone B-Prime).